A 636-amino-acid polypeptide reads, in one-letter code: Nucleolin 2 (636 aa).

3 disordered regions span residues 1–386 (MGKS…SKTL), 458–481 (ANER…SRTI), and 544–636 (SEIG…NDEE). Basic and acidic residues-rich tracts occupy residues 43 to 63 (KELI…KKVE) and 76 to 89 (EKTK…KDES). The span at 90-103 (SSEEEDDSSSDEEI) shows a compositional bias: acidic residues. Basic and acidic residues predominate over residues 104–118 (APAKKRPEPIKKAKV). Composition is skewed to acidic residues over residues 122-133 (SSDDDSTSDEET), 152-163 (SSDDDSSSDEET), and 182-193 (SSDDDSSSDEET). The segment covering 224–238 (TPAKKEPIVVKKDSS) has biased composition (basic and acidic residues). Composition is skewed to acidic residues over residues 267–278 (SSEEESSSDDEP), 299–311 (SSEE…ESDD), and 331–341 (SSDESSDESDK). The span at 342–367 (EESKDEKVTPKKKDSDVEMVDAEQKS) shows a compositional bias: basic and acidic residues. Residues 368–383 (NAKQPKTPTNQTQGGS) show a composition bias toward polar residues. RRM domains lie at 384–460 (KTLF…LANE) and 479–558 (RTIY…ESRP). Residues 464 to 481 (PRNSNPGRKGEGSQSRTI) show a composition bias toward polar residues. Basic and acidic residues-rich tracts occupy residues 552–566 (HVEE…EGRS) and 579–604 (RHSD…DRGA). Positions 622–636 (MESSKGTKTVFNDEE) are enriched in polar residues.

Interacts with THAL in the nucleus. In terms of tissue distribution, expressed at low levels in flower buds.

It is found in the nucleus. The protein resides in the nucleolus. Involved in pre-rRNA processing and ribosome assembly. This Arabidopsis thaliana (Mouse-ear cress) protein is Nucleolin 2.